The primary structure comprises 362 residues: MMMSNLPKDLVEEILSRVPFKYLRAIRSTCKNWYDLSKNRSFANKNIDKAAVSGEKEFLMITQFNVFWVGVNLHRSQNNSFDLSIQLKAKIVSRDKKDDLFQKSQVIHCNGVFLCVREKMLVVLNPYWGQTKRIMPRPPFGCFDRYALGYDKSSGSHKILRLFGVNQNNLNIYDLSSSSWMIPDGTLERDMEYMKQGVSLNGDTYWYAKDKESIDWYLLCFDFTRERFGTPLPLPFSNEGYTLHKGYKSLSALKEEKLAVLLWDTMVIWVTNKIEPDAVSWSIFLKLDMEPSIYCRYGNFFIDEEKKVAVVFEKDSSSWSWMYNPNYNKAYIAGENGYFKSVNLLKSPNTLQLGHLVCSYAL.

The F-box domain occupies 1 to 50 (MMMSNLPKDLVEEILSRVPFKYLRAIRSTCKNWYDLSKNRSFANKNIDKA). Kelch repeat units lie at residues 150–201 (YDKS…VSLN) and 293–341 (IYCR…YFKS).

The polypeptide is Putative F-box/kelch-repeat protein At3g20710 (Arabidopsis thaliana (Mouse-ear cress)).